Here is a 474-residue protein sequence, read N- to C-terminus: MWTVQNRESLGLLSFPVMIAMVCCAHSANEPSNMSYVKETVDRLLKGYDIRLRPDFGGPPVDVGMRIDVASIDMVSEVNMDYTLTMYFQQSWKDKRLSYSGIPLNLTLDNRVADQLWVPDTYFLNDKKSFVHGVTVKNRMIRLHPDGTVLYGLRITTTAACMMDLRRYPLDEQNCTLEIESYGYTTDDIEFYWNGGEGAVTGVNKIELPQFSIVDYKMVSKKVEFTTGAYPRLSLSFRLKRNIGYFILQTYMPSTLITILSWVSFWINYDASAARVALGITTVLTMTTISTHLRETLPKIPYVKAIDIYLMGCFVFVFLALLEYAFVNYIFFGKGPQKKGAGKQDQSANEKNKLEMNKVQVDAHGNILLSTLEIRNETSGSEVLTGVGDPKTTMYSYDSASIQYRKPMSSREGYGRALDRHGAHSKGRIRRRASQLKVKIPDLTDVNSIDKWSRMFFPITFSLFNVVYWLYYVH.

An N-terminal signal peptide occupies residues 1 to 25 (MWTVQNRESLGLLSFPVMIAMVCCA). The Extracellular segment spans residues 26 to 245 (HSANEPSNMS…SFRLKRNIGY (220 aa)). N-linked (GlcNAc...) asparagine glycans are attached at residues N33 and N105. Position 122 (Y122) interacts with histamine. The cysteines at positions 161 and 175 are disulfide-linked. N174 carries N-linked (GlcNAc...) asparagine glycosylation. Residues 181–182 (SY) and T227 each bind histamine. Y182 and T227 together coordinate 4-aminobutanoate. The next 3 membrane-spanning stretches (helical) occupy residues 246 to 267 (FILQ…SFWI), 271 to 293 (ASAA…STHL), and 305 to 327 (AIDI…YAFV). Residues 328-451 (NYIFFGKGPQ…DLTDVNSIDK (124 aa)) are Cytoplasmic-facing. The chain crosses the membrane as a helical span at residues 452 to 473 (WSRMFFPITFSLFNVVYWLYYV).

This sequence belongs to the ligand-gated ion channel (TC 1.A.9) family. Gamma-aminobutyric acid receptor (TC 1.A.9.5) subfamily. GABRB1 sub-subfamily. Heteropentamer, formed by a combination of alpha (GABRA1-6), beta (GABRB1-3), gamma (GABRG1-3), delta (GABRD), epsilon (GABRE), rho (GABRR1-3), pi (GABRP) and theta (GABRQ) chains, each subunit exhibiting distinct physiological and pharmacological properties. Binds UBQLN1.

Its subcellular location is the postsynaptic cell membrane. The protein resides in the cell membrane. The catalysed reaction is chloride(in) = chloride(out). With respect to regulation, potentiated by histamine. Its function is as follows. Beta subunit of the heteropentameric ligand-gated chloride channel gated by gamma-aminobutyric acid (GABA), a major inhibitory neurotransmitter in the brain. GABA-gated chloride channels, also named GABA(A) receptors (GABAAR), consist of five subunits arranged around a central pore and contain GABA active binding site(s) located at the alpha and beta subunit interface(s). When activated by GABA, GABAARs selectively allow the flow of chloride anions across the cell membrane down their electrochemical gradient. Chloride influx into the postsynaptic neuron following GABAAR opening decreases the neuron ability to generate a new action potential, thereby reducing nerve transmission. Beta-containing GABAARs can simultaneously bind GABA and histamine where histamine binds at the interface of two neighboring beta subunits, which may be involved in the regulation of sleep and wakefulness. The chain is Gamma-aminobutyric acid receptor subunit beta-1 (GABRB1) from Bos taurus (Bovine).